The following is a 102-amino-acid chain: NADH-quinone oxidoreductase subunit K 2 (102 aa).

3 helical membrane-spanning segments follow: residues 1-21, 30-50, and 65-85; these read MIVP…LGLV, IIMM…AFVG, and LMIM…VVYL.

It belongs to the complex I subunit 4L family. As to quaternary structure, NDH-1 is composed of 14 different subunits. Subunits NuoA, H, J, K, L, M, N constitute the membrane sector of the complex.

The protein resides in the cell inner membrane. It carries out the reaction a quinone + NADH + 5 H(+)(in) = a quinol + NAD(+) + 4 H(+)(out). Its function is as follows. NDH-1 shuttles electrons from NADH, via FMN and iron-sulfur (Fe-S) centers, to quinones in the respiratory chain. The immediate electron acceptor for the enzyme in this species is believed to be ubiquinone. Couples the redox reaction to proton translocation (for every two electrons transferred, four hydrogen ions are translocated across the cytoplasmic membrane), and thus conserves the redox energy in a proton gradient. In Geotalea daltonii (strain DSM 22248 / JCM 15807 / FRC-32) (Geobacter daltonii), this protein is NADH-quinone oxidoreductase subunit K 2.